A 291-amino-acid chain; its full sequence is N-acetylmannosamine kinase (291 aa).

ATP-binding positions include 5–12 (AVDIGGTK) and 132–139 (GVGGGIVV). Zn(2+) contacts are provided by histidine 156, cysteine 166, cysteine 168, and cysteine 173.

Belongs to the ROK (NagC/XylR) family. NanK subfamily. As to quaternary structure, homodimer.

The catalysed reaction is an N-acyl-D-mannosamine + ATP = an N-acyl-D-mannosamine 6-phosphate + ADP + H(+). It functions in the pathway amino-sugar metabolism; N-acetylneuraminate degradation; D-fructose 6-phosphate from N-acetylneuraminate: step 2/5. In terms of biological role, catalyzes the phosphorylation of N-acetylmannosamine (ManNAc) to ManNAc-6-P. The chain is N-acetylmannosamine kinase (nanK2) from Escherichia coli O6:H1 (strain CFT073 / ATCC 700928 / UPEC).